Reading from the N-terminus, the 130-residue chain is Small ribosomal subunit protein uS9 (130 aa).

The interval 102-130 (GFLTRDPRMKERKKYGLKKARRAPQFSKR) is disordered. Basic residues predominate over residues 111 to 130 (KERKKYGLKKARRAPQFSKR).

Belongs to the universal ribosomal protein uS9 family.

The protein is Small ribosomal subunit protein uS9 of Clostridium novyi (strain NT).